The primary structure comprises 253 residues: 5'/3'-nucleotidase SurE (253 aa).

Positions 8, 9, 39, and 92 each coordinate a divalent metal cation.

It belongs to the SurE nucleotidase family. The cofactor is a divalent metal cation.

The protein localises to the cytoplasm. The catalysed reaction is a ribonucleoside 5'-phosphate + H2O = a ribonucleoside + phosphate. It carries out the reaction a ribonucleoside 3'-phosphate + H2O = a ribonucleoside + phosphate. It catalyses the reaction [phosphate](n) + H2O = [phosphate](n-1) + phosphate + H(+). Functionally, nucleotidase with a broad substrate specificity as it can dephosphorylate various ribo- and deoxyribonucleoside 5'-monophosphates and ribonucleoside 3'-monophosphates with highest affinity to 3'-AMP. Also hydrolyzes polyphosphate (exopolyphosphatase activity) with the preference for short-chain-length substrates (P20-25). Might be involved in the regulation of dNTP and NTP pools, and in the turnover of 3'-mononucleotides produced by numerous intracellular RNases (T1, T2, and F) during the degradation of various RNAs. In Salmonella typhimurium (strain LT2 / SGSC1412 / ATCC 700720), this protein is 5'/3'-nucleotidase SurE.